We begin with the raw amino-acid sequence, 1414 residues long: DNA-directed RNA polymerase subunit beta' (1414 aa).

Cys-70, Cys-72, Cys-85, and Cys-88 together coordinate Zn(2+). Residues Asp-461, Asp-463, and Asp-465 each coordinate Mg(2+). Zn(2+) is bound by residues Cys-820, Cys-894, Cys-901, and Cys-904.

This sequence belongs to the RNA polymerase beta' chain family. The RNAP catalytic core consists of 2 alpha, 1 beta, 1 beta' and 1 omega subunit. When a sigma factor is associated with the core the holoenzyme is formed, which can initiate transcription. Mg(2+) is required as a cofactor. It depends on Zn(2+) as a cofactor.

The catalysed reaction is RNA(n) + a ribonucleoside 5'-triphosphate = RNA(n+1) + diphosphate. Its function is as follows. DNA-dependent RNA polymerase catalyzes the transcription of DNA into RNA using the four ribonucleoside triphosphates as substrates. The chain is DNA-directed RNA polymerase subunit beta' from Cupriavidus taiwanensis (strain DSM 17343 / BCRC 17206 / CCUG 44338 / CIP 107171 / LMG 19424 / R1) (Ralstonia taiwanensis (strain LMG 19424)).